Reading from the N-terminus, the 679-residue chain is Glycine--tRNA ligase beta subunit (679 aa).

This sequence belongs to the class-II aminoacyl-tRNA synthetase family. Tetramer of two alpha and two beta subunits.

The protein resides in the cytoplasm. It catalyses the reaction tRNA(Gly) + glycine + ATP = glycyl-tRNA(Gly) + AMP + diphosphate. In Streptococcus pyogenes serotype M6 (strain ATCC BAA-946 / MGAS10394), this protein is Glycine--tRNA ligase beta subunit.